A 417-amino-acid chain; its full sequence is Exodeoxyribonuclease 7 large subunit (417 aa).

The protein belongs to the XseA family. As to quaternary structure, heterooligomer composed of large and small subunits.

The protein localises to the cytoplasm. The enzyme catalyses Exonucleolytic cleavage in either 5'- to 3'- or 3'- to 5'-direction to yield nucleoside 5'-phosphates.. Functionally, bidirectionally degrades single-stranded DNA into large acid-insoluble oligonucleotides, which are then degraded further into small acid-soluble oligonucleotides. In Helicobacter hepaticus (strain ATCC 51449 / 3B1), this protein is Exodeoxyribonuclease 7 large subunit.